The sequence spans 277 residues: UPF0276 protein PP_2398 (277 aa).

The protein belongs to the UPF0276 family.

The protein is UPF0276 protein PP_2398 of Pseudomonas putida (strain ATCC 47054 / DSM 6125 / CFBP 8728 / NCIMB 11950 / KT2440).